We begin with the raw amino-acid sequence, 283 residues long: Protein/nucleic acid deglycase HchA (283 aa).

Residues H86, E91, and H123 each contribute to the Zn(2+) site. Residue C185 is the Nucleophile of the active site.

The protein belongs to the peptidase C56 family. HchA subfamily. In terms of assembly, homodimer.

Its subcellular location is the cytoplasm. The catalysed reaction is N(omega)-(1-hydroxy-2-oxopropyl)-L-arginyl-[protein] + H2O = lactate + L-arginyl-[protein] + H(+). It carries out the reaction N(6)-(1-hydroxy-2-oxopropyl)-L-lysyl-[protein] + H2O = lactate + L-lysyl-[protein] + H(+). It catalyses the reaction S-(1-hydroxy-2-oxopropyl)-L-cysteinyl-[protein] + H2O = lactate + L-cysteinyl-[protein] + H(+). The enzyme catalyses N(omega)-(1-hydroxy-2-oxoethyl)-L-arginyl-[protein] + H2O = L-arginyl-[protein] + glycolate + H(+). The catalysed reaction is N(6)-(1-hydroxy-2-oxoethyl)-L-lysyl-[protein] + H2O = glycolate + L-lysyl-[protein] + H(+). It carries out the reaction S-(1-hydroxy-2-oxoethyl)-L-cysteinyl-[protein] + H2O = glycolate + L-cysteinyl-[protein] + H(+). It catalyses the reaction N(2)-(1-hydroxy-2-oxopropyl)-dGTP + H2O = lactate + dGTP + H(+). The enzyme catalyses N(2)-(1-hydroxy-2-oxopropyl)-GTP + H2O = lactate + GTP + H(+). The catalysed reaction is N(2)-(1-hydroxy-2-oxopropyl)-GDP + H2O = lactate + GDP + H(+). It carries out the reaction N(2)-(1-hydroxy-2-oxopropyl)-GMP + H2O = lactate + GMP + H(+). It catalyses the reaction N(2)-(1-hydroxy-2-oxoethyl)-dGTP + H2O = dGTP + glycolate + H(+). The enzyme catalyses N(2)-(1-hydroxy-2-oxoethyl)-GTP + H2O = glycolate + GTP + H(+). The catalysed reaction is N(2)-(1-hydroxy-2-oxoethyl)-GDP + H2O = glycolate + GDP + H(+). It carries out the reaction N(2)-(1-hydroxy-2-oxoethyl)-GMP + H2O = glycolate + GMP + H(+). It catalyses the reaction an N(2)-(1-hydroxy-2-oxopropyl)-guanosine in RNA + H2O = a guanosine in RNA + lactate + H(+). The enzyme catalyses an N(2)-(1-hydroxy-2-oxopropyl)-2'-deoxyguanosine in DNA + H2O = a 2'-deoxyguanosine in DNA + lactate + H(+). The catalysed reaction is an N(2)-(1-hydroxy-2-oxoethyl)-guanosine in RNA + H2O = a guanosine in RNA + glycolate + H(+). It carries out the reaction an N(2)-(1-hydroxy-2-oxoethyl)-2'-deoxyguanosine in DNA + H2O = a 2'-deoxyguanosine in DNA + glycolate + H(+). Protein and nucleotide deglycase that catalyzes the deglycation of the Maillard adducts formed between amino groups of proteins or nucleotides and reactive carbonyl groups of glyoxals. Thus, functions as a protein deglycase that repairs methylglyoxal- and glyoxal-glycated proteins, and releases repaired proteins and lactate or glycolate, respectively. Deglycates cysteine, arginine and lysine residues in proteins, and thus reactivates these proteins by reversing glycation by glyoxals. Acts on early glycation intermediates (hemithioacetals and aminocarbinols), preventing the formation of Schiff bases and advanced glycation endproducts (AGE). Also functions as a nucleotide deglycase able to repair glycated guanine in the free nucleotide pool (GTP, GDP, GMP, dGTP) and in DNA and RNA. Is thus involved in a major nucleotide repair system named guanine glycation repair (GG repair), dedicated to reversing methylglyoxal and glyoxal damage via nucleotide sanitization and direct nucleic acid repair. Plays an important role in protecting cells from carbonyl stress. The polypeptide is Protein/nucleic acid deglycase HchA (Escherichia coli O7:K1 (strain IAI39 / ExPEC)).